Reading from the N-terminus, the 277-residue chain is Large ribosomal subunit protein uL2 (277 aa).

The tract at residues 199–277 is disordered; it reads DHGNINDGKA…ILRSRHQRKS (79 aa).

The protein belongs to the universal ribosomal protein uL2 family. In terms of assembly, part of the 50S ribosomal subunit. Forms a bridge to the 30S subunit in the 70S ribosome.

Its function is as follows. One of the primary rRNA binding proteins. Required for association of the 30S and 50S subunits to form the 70S ribosome, for tRNA binding and peptide bond formation. It has been suggested to have peptidyltransferase activity; this is somewhat controversial. Makes several contacts with the 16S rRNA in the 70S ribosome. In Mesorhizobium japonicum (strain LMG 29417 / CECT 9101 / MAFF 303099) (Mesorhizobium loti (strain MAFF 303099)), this protein is Large ribosomal subunit protein uL2.